We begin with the raw amino-acid sequence, 286 residues long: ATP synthase gamma chain (286 aa).

Belongs to the ATPase gamma chain family. F-type ATPases have 2 components, CF(1) - the catalytic core - and CF(0) - the membrane proton channel. CF(1) has five subunits: alpha(3), beta(3), gamma(1), delta(1), epsilon(1). CF(0) has three main subunits: a, b and c.

The protein localises to the cell membrane. In terms of biological role, produces ATP from ADP in the presence of a proton gradient across the membrane. The gamma chain is believed to be important in regulating ATPase activity and the flow of protons through the CF(0) complex. The polypeptide is ATP synthase gamma chain (Oceanobacillus iheyensis (strain DSM 14371 / CIP 107618 / JCM 11309 / KCTC 3954 / HTE831)).